We begin with the raw amino-acid sequence, 306 residues long: Homoserine kinase (306 aa).

An ATP-binding site is contributed by 90 to 100 (PLARGLGSSAS).

Belongs to the GHMP kinase family. Homoserine kinase subfamily.

It localises to the cytoplasm. The enzyme catalyses L-homoserine + ATP = O-phospho-L-homoserine + ADP + H(+). It functions in the pathway amino-acid biosynthesis; L-threonine biosynthesis; L-threonine from L-aspartate: step 4/5. Its function is as follows. Catalyzes the ATP-dependent phosphorylation of L-homoserine to L-homoserine phosphate. This chain is Homoserine kinase, found in Staphylococcus epidermidis (strain ATCC 12228 / FDA PCI 1200).